Reading from the N-terminus, the 158-residue chain is MSIEGVLEKGFVTTTLDTVINYTRTGSLWPMTFGLACCAVEMMHAGAARYDLDRFGIVFRPSPRQSDVMIVAGTLVNKMAPALRKVYDQMAEPRWVISMGSCANGGGYYHYSYAVVRGCDRIVPVDVYVPGCPPTAEALLYGIIQLQNKIKRTNTIAR.

[4Fe-4S] cluster contacts are provided by C37, C38, C102, and C132.

Belongs to the complex I 20 kDa subunit family. NDH-1 is composed of 14 different subunits. Subunits NuoB, C, D, E, F, and G constitute the peripheral sector of the complex. [4Fe-4S] cluster is required as a cofactor.

The protein localises to the cell inner membrane. It carries out the reaction a quinone + NADH + 5 H(+)(in) = a quinol + NAD(+) + 4 H(+)(out). Functionally, NDH-1 shuttles electrons from NADH, via FMN and iron-sulfur (Fe-S) centers, to quinones in the respiratory chain. Couples the redox reaction to proton translocation (for every two electrons transferred, four hydrogen ions are translocated across the cytoplasmic membrane), and thus conserves the redox energy in a proton gradient. The sequence is that of NADH-quinone oxidoreductase subunit B from Methylobacillus flagellatus (strain ATCC 51484 / DSM 6875 / VKM B-1610 / KT).